Reading from the N-terminus, the 286-residue chain is L-cysteine S-thiosulfotransferase subunit SoxA (286 aa).

The N-terminal stretch at 1–28 (MKKTIQRGLFTGALVLLTAMTSKPAHAA) is a signal peptide. A disulfide bond links Cys-106 and Cys-137. Positions 180-286 (DAYMKGKEMF…LKFNGPASRK (107 aa)) constitute a Cytochrome c domain. Residues Cys-200 and His-204 each coordinate heme. Substrate is bound at residue Arg-243. A heme-binding site is contributed by Cys-247. Cys-247 acts as the Cysteine persulfide intermediate in catalysis.

Belongs to the SoxA family. As to quaternary structure, heterodimer of SoxA and SoxX. The SoxAX complex interacts with CT1020, SoxAX-binding protein SaxB (SoxK); this interaction stimulates catalytic activity of the complex. Requires heme as cofactor. Cysteine persulfide at Cys-247.

The protein localises to the periplasm. It carries out the reaction L-cysteinyl-[SoxY protein] + thiosulfate + 2 Fe(III)-[cytochrome c] = S-sulfosulfanyl-L-cysteinyl-[SoxY protein] + 2 Fe(II)-[cytochrome c] + 2 H(+). It catalyses the reaction S-sulfanyl-L-cysteinyl-[SoxY protein] + thiosulfate + 2 Fe(III)-[cytochrome c] = S-(2-sulfodisulfanyl)-L-cysteinyl-[SoxY protein] + 2 Fe(II)-[cytochrome c] + 2 H(+). Functionally, C-type monoheme cytochrome, which is part of the SoxAX cytochrome complex involved in sulfur oxidation. The SoxAX complex catalyzes the formation of a heterodisulfide bond between the conserved cysteine residue on a sulfur carrier SoxYZ complex subunit SoxY and thiosulfate or other inorganic sulfur substrates. This leads to the liberation of two electrons, which may be transferred from the SoxAX complex to another cytochrome c and which then may be used for reductive CO(2) fixation. The protein is L-cysteine S-thiosulfotransferase subunit SoxA of Chlorobaculum thiosulfatiphilum (Chlorobium limicola f.sp. thiosulfatophilum).